A 207-amino-acid chain; its full sequence is Large ribosomal subunit protein uL4 (207 aa).

A disordered region spans residues 53 to 76 (NRSAVRGGGRKPWRQKGTGRARQG). A compositionally biased stretch (basic residues) spans 60-71 (GGRKPWRQKGTG).

The protein belongs to the universal ribosomal protein uL4 family. Part of the 50S ribosomal subunit.

Functionally, one of the primary rRNA binding proteins, this protein initially binds near the 5'-end of the 23S rRNA. It is important during the early stages of 50S assembly. It makes multiple contacts with different domains of the 23S rRNA in the assembled 50S subunit and ribosome. Forms part of the polypeptide exit tunnel. This Staphylococcus saprophyticus subsp. saprophyticus (strain ATCC 15305 / DSM 20229 / NCIMB 8711 / NCTC 7292 / S-41) protein is Large ribosomal subunit protein uL4.